Here is a 366-residue protein sequence, read N- to C-terminus: UDP-N-acetylglucosamine--N-acetylmuramyl-(pentapeptide) pyrophosphoryl-undecaprenol N-acetylglucosamine transferase (366 aa).

UDP-N-acetyl-alpha-D-glucosamine contacts are provided by residues 15–17 (TGG), Asn127, Arg175, Ser201, Ile255, and Gln300.

It belongs to the glycosyltransferase 28 family. MurG subfamily.

Its subcellular location is the cell inner membrane. It carries out the reaction di-trans,octa-cis-undecaprenyl diphospho-N-acetyl-alpha-D-muramoyl-L-alanyl-D-glutamyl-meso-2,6-diaminopimeloyl-D-alanyl-D-alanine + UDP-N-acetyl-alpha-D-glucosamine = di-trans,octa-cis-undecaprenyl diphospho-[N-acetyl-alpha-D-glucosaminyl-(1-&gt;4)]-N-acetyl-alpha-D-muramoyl-L-alanyl-D-glutamyl-meso-2,6-diaminopimeloyl-D-alanyl-D-alanine + UDP + H(+). It functions in the pathway cell wall biogenesis; peptidoglycan biosynthesis. In terms of biological role, cell wall formation. Catalyzes the transfer of a GlcNAc subunit on undecaprenyl-pyrophosphoryl-MurNAc-pentapeptide (lipid intermediate I) to form undecaprenyl-pyrophosphoryl-MurNAc-(pentapeptide)GlcNAc (lipid intermediate II). This is UDP-N-acetylglucosamine--N-acetylmuramyl-(pentapeptide) pyrophosphoryl-undecaprenol N-acetylglucosamine transferase from Thiobacillus denitrificans (strain ATCC 25259 / T1).